Here is a 312-residue protein sequence, read N- to C-terminus: Large ribosomal subunit protein uL10 (312 aa).

Residues 287-312 form a disordered region; that stretch reads AAAAPAAKKEEPKEESDDDMGFGLFD.

The protein belongs to the universal ribosomal protein uL10 family. As to quaternary structure, P0 forms a pentameric complex by interaction with dimers of P1 and P2. Post-translationally, phosphorylated.

Ribosomal protein P0 is the functional equivalent of E.coli protein L10. The polypeptide is Large ribosomal subunit protein uL10 (Caenorhabditis elegans).